Reading from the N-terminus, the 156-residue chain is Ribosomal RNA large subunit methyltransferase H (156 aa).

S-adenosyl-L-methionine-binding positions include Leu-73, Gly-104, and 123 to 128 (ISSMTL).

Belongs to the RNA methyltransferase RlmH family. As to quaternary structure, homodimer.

The protein localises to the cytoplasm. It carries out the reaction pseudouridine(1915) in 23S rRNA + S-adenosyl-L-methionine = N(3)-methylpseudouridine(1915) in 23S rRNA + S-adenosyl-L-homocysteine + H(+). Its function is as follows. Specifically methylates the pseudouridine at position 1915 (m3Psi1915) in 23S rRNA. The protein is Ribosomal RNA large subunit methyltransferase H of Burkholderia multivorans (strain ATCC 17616 / 249).